Here is a 630-residue protein sequence, read N- to C-terminus: DELLA protein DWARF8 (630 aa).

The disordered stretch occupies residues 1-35 (MKREYQDAGGSGGDMGSSKDKMMAAAAGAGEQEEE). The DELLA motif signature appears at 38-42 (DELLA). Positions 161-222 (PIPSPVAAPS…AAPPATQASA (62 aa)) are disordered. Composition is skewed to low complexity over residues 165-176 (PVAAPSADPSTD) and 191-222 (TSSS…QASA). The 390-residue stretch at 234–623 (VDTQEAGIRL…RPLIATSAWR (390 aa)) folds into the GRAS domain. The interval 241 to 297 (IRLVHALLACAEAVQQENFSAAEALVKQIPMLASSQGGAMRKVAAYFGEALARRVYR) is leucine repeat I (LRI). Residues 248-252 (LACAE) carry the LxCxE motif motif. A VHIID region spans residues 316 to 381 (HAHFYESCPY…GGPPSFRLTG (66 aa)). The short motif at 347 to 351 (VHVVD) is the VHIID element. The interval 395 to 427 (QVGWKLAQFAHTIRVDFQYRGLVAATLADLEPF) is leucine repeat II (LRII). The segment at 443–544 (IAVNSVFELH…EVYLGRQICN (102 aa)) is PFYRE. The LXXLL motif signature appears at 451–455 (LHRLL). The segment at 547–623 (ACEGAERTER…RPLIATSAWR (77 aa)) is SAW.

Belongs to the GRAS family. DELLA subfamily. Phosphorylated. Post-translationally, ubiquitinated. Upon GA application it is ubiquitinated, leading to its subsequent degradation.

It localises to the nucleus. Its function is as follows. Probable transcriptional regulator that acts as a repressor of the gibberellin (GA) signaling pathway. Probably acts by participating in large multiprotein complexes that repress transcription of GA-inducible genes. Upon GA application, it is degraded by the proteasome, allowing the GA signaling pathway. This is DELLA protein DWARF8 (D8) from Zea mays (Maize).